A 237-amino-acid chain; its full sequence is Octanoyltransferase (237 aa).

The region spanning 27 to 210 (SGGDDILLLL…EFYHIFQPAG (184 aa)) is the BPL/LPL catalytic domain. Substrate is bound by residues 72–79 (RGGNVTCH), 139–141 (SLG), and 152–154 (GMA). The active-site Acyl-thioester intermediate is the cysteine 170.

It belongs to the LipB family.

It is found in the cytoplasm. It catalyses the reaction octanoyl-[ACP] + L-lysyl-[protein] = N(6)-octanoyl-L-lysyl-[protein] + holo-[ACP] + H(+). It participates in protein modification; protein lipoylation via endogenous pathway; protein N(6)-(lipoyl)lysine from octanoyl-[acyl-carrier-protein]: step 1/2. In terms of biological role, catalyzes the transfer of endogenously produced octanoic acid from octanoyl-acyl-carrier-protein onto the lipoyl domains of lipoate-dependent enzymes. Lipoyl-ACP can also act as a substrate although octanoyl-ACP is likely to be the physiological substrate. The polypeptide is Octanoyltransferase (Desulfovibrio desulfuricans (strain ATCC 27774 / DSM 6949 / MB)).